Here is a 128-residue protein sequence, read N- to C-terminus: Cytochrome b (128 aa).

A run of 3 helical transmembrane segments spans residues 25–45 (FGSM…FLAI), 69–90 (WIMQ…YIHI), and 105–125 (WLSG…XMCY). Residues His-75 and His-89 each coordinate heme b. His-126 is a binding site for a ubiquinone.

It belongs to the cytochrome b family. The cytochrome bc1 complex contains 3 respiratory subunits (MT-CYB, CYC1 and UQCRFS1), 2 core proteins (UQCRC1 and UQCRC2) and probably 6 low-molecular weight proteins. Heme b serves as cofactor.

Its subcellular location is the mitochondrion inner membrane. In terms of biological role, component of the ubiquinol-cytochrome c reductase complex (complex III or cytochrome b-c1 complex) that is part of the mitochondrial respiratory chain. The b-c1 complex mediates electron transfer from ubiquinol to cytochrome c. Contributes to the generation of a proton gradient across the mitochondrial membrane that is then used for ATP synthesis. This Crotalus viridis viridis (Prairie rattlesnake) protein is Cytochrome b (MT-CYB).